We begin with the raw amino-acid sequence, 348 residues long: Protein RecA (348 aa).

Position 65 to 72 (65 to 72 (GPESSGKT)) interacts with ATP. Residues 326 to 336 (LLTPAEEKPET) show a composition bias toward basic and acidic residues. The interval 326-348 (LLTPAEEKPETDAAPEIEENEEF) is disordered. The span at 338 to 348 (AAPEIEENEEF) shows a compositional bias: acidic residues.

This sequence belongs to the RecA family.

The protein localises to the cytoplasm. Its function is as follows. Can catalyze the hydrolysis of ATP in the presence of single-stranded DNA, the ATP-dependent uptake of single-stranded DNA by duplex DNA, and the ATP-dependent hybridization of homologous single-stranded DNAs. It interacts with LexA causing its activation and leading to its autocatalytic cleavage. This is Protein RecA from Aliivibrio fischeri (strain ATCC 700601 / ES114) (Vibrio fischeri).